The sequence spans 183 residues: Transmembrane protein 154 (183 aa).

The first 22 residues, Met-1–Gly-22, serve as a signal peptide directing secretion. Residues Asn-23–Glu-75 lie on the Extracellular side of the membrane. A helical membrane pass occupies residues Phe-76 to Phe-96. Over Leu-97 to Ser-183 the chain is Cytoplasmic. Positions Glu-163–Ser-183 are disordered. Residue Ser-179 is modified to Phosphoserine.

The protein resides in the membrane. This is Transmembrane protein 154 (TMEM154) from Homo sapiens (Human).